We begin with the raw amino-acid sequence, 92 residues long: Small ribosomal subunit protein uS19c (92 aa).

Belongs to the universal ribosomal protein uS19 family.

The protein localises to the plastid. The protein resides in the chloroplast. Its function is as follows. Protein S19 forms a complex with S13 that binds strongly to the 16S ribosomal RNA. This chain is Small ribosomal subunit protein uS19c (rps19), found in Marchantia polymorpha (Common liverwort).